Consider the following 86-residue polypeptide: Evasin-3 (86 aa).

An N-terminal signal peptide occupies residues 1–20 (MRALLARLLLCVLVVSDSKG). Intrachain disulfides connect Cys-42–Cys-57, Cys-46–Cys-59, and Cys-53–Cys-70. A glycan (N-linked (GlcNAc...) asparagine) is linked at Asn-45. N-linked (GlcNAc...) asparagine glycosylation occurs at Asn-76.

As to quaternary structure, monomer.

The protein resides in the secreted. In terms of biological role, salivary chemokine-binding protein which shows chemokine neutralizing activity and binds to host chemokines CXCL1, CXCL2, CXCL3, CXCL5, CXCL6 and CXCL8. Binds to CXCL8 with 1:1 stoichiometry. Disrupts CXCL8 homodimer formation, disrupts the glycosaminoglycan-binding site of CXCL8 and inhibits the interaction of CXCL8 with CXCR2. The sequence is that of Evasin-3 from Rhipicephalus sanguineus (Brown dog tick).